The sequence spans 235 residues: NAD(P)H-hydrate epimerase (235 aa).

One can recognise a YjeF N-terminal domain in the interval 18–221; it reads AAQIDEQLFT…SLVDEHELLM (204 aa). 65–69 is a (6S)-NADPHX binding site; it reads NNGGD. The K(+) site is built by Asn-66 and Asp-127. Residues 131-137 and Asp-160 contribute to the (6S)-NADPHX site; that span reads GFSFHPP. Ser-163 is a binding site for K(+).

Belongs to the NnrE/AIBP family. K(+) serves as cofactor.

The enzyme catalyses (6R)-NADHX = (6S)-NADHX. The catalysed reaction is (6R)-NADPHX = (6S)-NADPHX. Its function is as follows. Catalyzes the epimerization of the S- and R-forms of NAD(P)HX, a damaged form of NAD(P)H that is a result of enzymatic or heat-dependent hydration. This is a prerequisite for the S-specific NAD(P)H-hydrate dehydratase to allow the repair of both epimers of NAD(P)HX. This is NAD(P)H-hydrate epimerase from Caenorhabditis elegans.